A 683-amino-acid chain; its full sequence is Dixin (683 aa).

Leu2 carries N-myristoyl glycine lipidation. Residues 20–127 enclose the Calponin-homology (CH) domain; that stretch reads EQQLQAYVAW…LVLALAAHFK (108 aa). The segment at 127-300 is actin-binding; that stretch reads KPGSSRTVNQ…LEKEMEEAKK (174 aa). The residue at position 186 (Ser186) is a Phosphoserine. The segment at 207-235 is disordered; the sequence is GQQRSPSESSCSSLTSPSPIHSAKSESII. Positions 211–228 are enriched in low complexity; the sequence is SPSESSCSSLTSPSPIHS. Position 231 is a phosphoserine (Ser231). A coiled-coil region spans residues 279 to 452; it reads SWEEQLLEQQ…EALRKLSDVS (174 aa). The segment covering 482 to 492 has biased composition (polar residues); sequence NYNSHNSQSNG. 2 disordered regions span residues 482-509 and 556-594; these read NYNSHNSQSNGFLLPTAGKGATSVSNRG and TQKKQERKVRVKSPRTQVGSEYRESWPPNSKLPHSQSSP. Phosphoserine is present on Ser590. A DIX domain is found at 600–680; that stretch reads CTKVLYFTDR…KIVAWVEEDH (81 aa).

This sequence belongs to the DIXDC1 family. Isoform 1 but not isoform 2 binds filamentous actin. Interacts with the complex composed of DVL2 and Rac. Interacts with AXIN1; competes with MAP3K1. Interacts with MAP3K4 preventing MAP3K4 interaction with AXIN1. Directly interacts (via DIX domain) with DVL2 (via DIX domain). Interacts with gamma-tubulin. Post-translationally, phosphorylated on tyrosine and serine residues. Polyubiquitinated, leading to its proteasomal degradation. WNT3A signaling increases DIXDC1 protein levels by inhibiting its ubiquitination and subsequent degradation. In terms of tissue distribution, ubiquitously expressed with higher expression in cardiac and skeletal muscles.

The protein resides in the cell junction. It is found in the focal adhesion. It localises to the cytoplasm. Its subcellular location is the cytoskeleton. The protein localises to the stress fiber. Positive effector of the Wnt signaling pathway; activates WNT3A signaling via DVL2. Regulates JNK activation by AXIN1 and DVL2. The protein is Dixin (DIXDC1) of Homo sapiens (Human).